A 121-amino-acid polypeptide reads, in one-letter code: Lysozyme (121 aa).

The C-type lysozyme domain occupies 1-121; that stretch reads KTFTRCELVQ…NKPLPDISKC (121 aa). 4 cysteine pairs are disulfide-bonded: Cys6/Cys121, Cys27/Cys110, Cys62/Cys76, and Cys72/Cys90. Active-site residues include Glu32 and Asp50.

Belongs to the glycosyl hydrolase 22 family.

The catalysed reaction is Hydrolysis of (1-&gt;4)-beta-linkages between N-acetylmuramic acid and N-acetyl-D-glucosamine residues in a peptidoglycan and between N-acetyl-D-glucosamine residues in chitodextrins.. Its function is as follows. Lysozymes have primarily a bacteriolytic function; those in tissues and body fluids are associated with the monocyte-macrophage system and enhance the activity of immunoagents. This Galleria mellonella (Greater wax moth) protein is Lysozyme.